The sequence spans 310 residues: HPr kinase/phosphorylase (310 aa).

Catalysis depends on residues His-136 and Lys-157. 151 to 158 (GDSGIGKS) is an ATP binding site. Residue Ser-158 participates in Mg(2+) binding. Asp-175 acts as the Proton acceptor; for phosphorylation activity. Proton donor; for dephosphorylation activity in catalysis. The tract at residues 199–208 (LEIRGLGIIN) is important for the catalytic mechanism of both phosphorylation and dephosphorylation. Glu-200 lines the Mg(2+) pocket. Arg-241 is a catalytic residue. Residues 262–267 (PVRPGR) are important for the catalytic mechanism of dephosphorylation.

Belongs to the HPrK/P family. In terms of assembly, homohexamer. The cofactor is Mg(2+).

It carries out the reaction [HPr protein]-L-serine + ATP = [HPr protein]-O-phospho-L-serine + ADP + H(+). It catalyses the reaction [HPr protein]-O-phospho-L-serine + phosphate + H(+) = [HPr protein]-L-serine + diphosphate. Functionally, catalyzes the ATP- as well as the pyrophosphate-dependent phosphorylation of a specific serine residue in HPr, a phosphocarrier protein of the phosphoenolpyruvate-dependent sugar phosphotransferase system (PTS). HprK/P also catalyzes the pyrophosphate-producing, inorganic phosphate-dependent dephosphorylation (phosphorolysis) of seryl-phosphorylated HPr (P-Ser-HPr). The two antagonistic activities of HprK/P are regulated by several intracellular metabolites, which change their concentration in response to the absence or presence of rapidly metabolisable carbon sources (glucose, fructose, etc.) in the growth medium. Therefore, by controlling the phosphorylation state of HPr, HPrK/P is a sensor enzyme that plays a major role in the regulation of carbon metabolism and sugar transport: it mediates carbon catabolite repression (CCR), and regulates PTS-catalyzed carbohydrate uptake and inducer exclusion. This chain is HPr kinase/phosphorylase, found in Staphylococcus epidermidis (strain ATCC 35984 / DSM 28319 / BCRC 17069 / CCUG 31568 / BM 3577 / RP62A).